Here is a 192-residue protein sequence, read N- to C-terminus: MAPLGASPRLVLLFSGKRKSGKDFVTERLKSRLGGNICALLRLSGPLKEEYAREHGLDFQRLLDASTYKETYRRDMICWGEQKRQADPGFFCRKIVEGVSQPIWLVSDTRRTSDIQWFQEAYGAVIQTVRVVASEQSRQQRGWVFTPGVDDAESECGLDNFGNFDWVIENHGDEQCLEDQLEHLLGFIQAKL.

ATP-binding positions include 17 to 23 (KRKSGKD) and R141. N170 contacts substrate. Positions 171 and 180 each coordinate ATP.

In terms of assembly, monomer.

It is found in the cytoplasm. Its subcellular location is the cytosol. The enzyme catalyses (R)-5-phosphomevalonate + ATP = (R)-5-diphosphomevalonate + ADP. The protein operates within isoprenoid biosynthesis; isopentenyl diphosphate biosynthesis via mevalonate pathway; isopentenyl diphosphate from (R)-mevalonate: step 2/3. Its function is as follows. Catalyzes the reversible ATP-dependent phosphorylation of mevalonate 5-phosphate to produce mevalonate diphosphate and ADP, a key step in the mevalonic acid mediated biosynthesis of isopentenyl diphosphate and other polyisoprenoid metabolites. This is Phosphomevalonate kinase (Pmvk) from Mus musculus (Mouse).